Reading from the N-terminus, the 444-residue chain is MTLDLSTPATAGYLSGFANEFATEALPGALPHGRNSPQRAPYGLYAEQLSGTAFTAPRGHNRRSWLYRIRPAAVHRPFEPVTGPQRLVSEFGDSADVPPTPPNQLRWDPLPMPVEPTDFVEGLVTMAGNGSAAAMNGCAIHLYAANRSMQDRFFYSADGELLIVPQQGRLFIATEFGRLDVEPFEIAVIPRGVRFSVALPDGDARGYICENFGALLRLPDLGPIGSNGLANPRDFLTPQAAYEDREGAFELVAKLNGRLWRADIGHSPFDVVAWHGNYAPYKYDLRLFNTIGSISFDHPDPSIFLVLQSQSDTPGVDAIDFVIFPPRWLAAEDTFRPPWFHRNVASEFMGLVHGAYDAKAEGFVPGGASLHNCMSGHGPDADTFEKASASDTTKPHKVDATMAFMFETRTLIRPTRYALDTAQLQADYFECWQGIRKHFNPEQQ.

The active-site Proton acceptor is His298. Residues His341 and Glu347 each contribute to the Fe cation site. Homogentisate is bound by residues Tyr356 and His377. His377 serves as a coordination point for Fe cation.

The protein belongs to the homogentisate dioxygenase family. Hexamer; dimer of trimers. Fe cation is required as a cofactor.

The catalysed reaction is homogentisate + O2 = 4-maleylacetoacetate + H(+). It participates in amino-acid degradation; L-phenylalanine degradation; acetoacetate and fumarate from L-phenylalanine: step 4/6. Functionally, involved in the catabolism of homogentisate (2,5-dihydroxyphenylacetate or 2,5-OH-PhAc), a central intermediate in the degradation of phenylalanine and tyrosine. Catalyzes the oxidative ring cleavage of the aromatic ring of homogentisate to yield maleylacetoacetate. This is Homogentisate 1,2-dioxygenase from Burkholderia ambifaria (strain MC40-6).